We begin with the raw amino-acid sequence, 406 residues long: Acetylornithine aminotransferase (406 aa).

Residues 108-109 (GA) and F141 contribute to the pyridoxal 5'-phosphate site. R144 contributes to the N(2)-acetyl-L-ornithine binding site. 226–229 (DEVQ) serves as a coordination point for pyridoxal 5'-phosphate. K255 bears the N6-(pyridoxal phosphate)lysine mark. T283 contributes to the N(2)-acetyl-L-ornithine binding site. T284 serves as a coordination point for pyridoxal 5'-phosphate.

The protein belongs to the class-III pyridoxal-phosphate-dependent aminotransferase family. ArgD subfamily. As to quaternary structure, homodimer. It depends on pyridoxal 5'-phosphate as a cofactor.

It localises to the cytoplasm. It catalyses the reaction N(2)-acetyl-L-ornithine + 2-oxoglutarate = N-acetyl-L-glutamate 5-semialdehyde + L-glutamate. Its pathway is amino-acid biosynthesis; L-arginine biosynthesis; N(2)-acetyl-L-ornithine from L-glutamate: step 4/4. This Pseudomonas putida (strain ATCC 47054 / DSM 6125 / CFBP 8728 / NCIMB 11950 / KT2440) protein is Acetylornithine aminotransferase.